The primary structure comprises 379 residues: Cobalt-precorrin-5B C(1)-methyltransferase (379 aa).

This sequence belongs to the CbiD family.

It catalyses the reaction Co-precorrin-5B + S-adenosyl-L-methionine = Co-precorrin-6A + S-adenosyl-L-homocysteine. The protein operates within cofactor biosynthesis; adenosylcobalamin biosynthesis; cob(II)yrinate a,c-diamide from sirohydrochlorin (anaerobic route): step 6/10. Functionally, catalyzes the methylation of C-1 in cobalt-precorrin-5B to form cobalt-precorrin-6A. The chain is Cobalt-precorrin-5B C(1)-methyltransferase from Salmonella arizonae (strain ATCC BAA-731 / CDC346-86 / RSK2980).